Reading from the N-terminus, the 230-residue chain is Ribose-5-phosphate isomerase A (230 aa).

Residues 32-35 (TGST), 85-88 (DGAD), and 98-101 (KGGG) contribute to the substrate site. The Proton acceptor role is filled by Glu-107. A substrate-binding site is contributed by Lys-125.

This sequence belongs to the ribose 5-phosphate isomerase family. Homodimer.

It catalyses the reaction aldehydo-D-ribose 5-phosphate = D-ribulose 5-phosphate. The protein operates within carbohydrate degradation; pentose phosphate pathway; D-ribose 5-phosphate from D-ribulose 5-phosphate (non-oxidative stage): step 1/1. In terms of biological role, catalyzes the reversible conversion of ribose-5-phosphate to ribulose 5-phosphate. This is Ribose-5-phosphate isomerase A from Burkholderia vietnamiensis (strain G4 / LMG 22486) (Burkholderia cepacia (strain R1808)).